A 446-amino-acid polypeptide reads, in one-letter code: Glycerol-3-phosphate acyltransferase 3 (446 aa).

A run of 3 helical transmembrane segments spans residues 25 to 45 (LPSALGVSLGISEAYMWVLVK), 142 to 162 (LRLTVVWVIGVIVRYCFLLPL), and 164 to 184 (FTLAAIGITSMIVGTTVVGQL). The HXXXXD motif signature appears at 232-237 (HTSPID). The helical transmembrane segment at 352 to 372 (IVSYLLRIMTSWAIVCHVWYM) threads the bilayer. Residues 418-446 (FKEEQQKNYSKMLVRNGSQGNLPAGTESD) are disordered.

This sequence belongs to the 1-acyl-sn-glycerol-3-phosphate acyltransferase family.

Its subcellular location is the endoplasmic reticulum membrane. It catalyses the reaction sn-glycerol 3-phosphate + an acyl-CoA = a 1-acyl-sn-glycero-3-phosphate + CoA. The enzyme catalyses a 1-acyl-sn-glycero-3-phosphate + an acyl-CoA = a 1,2-diacyl-sn-glycero-3-phosphate + CoA. The catalysed reaction is dodecanoyl-CoA + sn-glycerol 3-phosphate = 1-dodecanoyl-sn-glycerol 3-phosphate + CoA. It carries out the reaction sn-glycerol 3-phosphate + hexadecanoyl-CoA = 1-hexadecanoyl-sn-glycero-3-phosphate + CoA. It catalyses the reaction sn-glycerol 3-phosphate + (9Z)-octadecenoyl-CoA = 1-(9Z-octadecenoyl)-sn-glycero-3-phosphate + CoA. The enzyme catalyses (9Z,12Z)-octadecadienoyl-CoA + sn-glycerol 3-phosphate = 1-(9Z,12Z)-octadecadienoyl-sn-glycero-3-phosphate + CoA. The catalysed reaction is 1-tetradecanoyl-sn-glycerol 3-phosphate + (9Z)-octadecenoyl-CoA = 1-tetradecanoyl-2-(9Z)-octadecenoyl-sn-glycero-3-phosphate + CoA. It carries out the reaction 1-hexadecanoyl-sn-glycero-3-phosphate + (9Z)-octadecenoyl-CoA = 1-hexadecanoyl-2-(9Z-octadecenoyl)-sn-glycero-3-phosphate + CoA. It catalyses the reaction 1-(9Z-octadecenoyl)-sn-glycero-3-phosphate + (9Z)-octadecenoyl-CoA = 1,2-di-(9Z-octadecenoyl)-sn-glycero-3-phosphate + CoA. The enzyme catalyses 1-(6Z,9Z,12Z-octadecatrienoyl)-sn-glycero-3-phosphate + (9Z)-octadecenoyl-CoA = (6Z,9Z,12Z)-octadecatrienoyl-2-(9Z)-octadecenoyl-sn-glycero-3-phosphate + CoA. The catalysed reaction is 1-(9Z,12Z,15Z)-octadecatrienoyl-sn-glycero-3-phosphate + (9Z)-octadecenoyl-CoA = 1-(9Z,12Z,15Z)-octadecatrienoyl-2-(9Z)-octadecenoyl-sn-glycero-3-phosphate + CoA. It carries out the reaction 1-(9Z-octadecenoyl)-sn-glycero-3-phosphate + tetradecanoyl-CoA = 1-(9Z)-octadecenoyl-2-tetradecanoyl-sn-glycero-3-phosphate + CoA. It catalyses the reaction 1-(9Z-octadecenoyl)-sn-glycero-3-phosphate + hexadecanoyl-CoA = 1-(9Z)-octadecenoyl-2-hexadecanoyl-sn-glycero-3-phosphate + CoA. The enzyme catalyses 1-(9Z-octadecenoyl)-sn-glycero-3-phosphate + octadecanoyl-CoA = 1-(9Z-octadecenoyl)-2-octadecanoyl-sn-glycero-3-phosphate + CoA. The catalysed reaction is 1-(9Z-octadecenoyl)-sn-glycero-3-phosphate + (9Z,12Z)-octadecadienoyl-CoA = 1-(9Z)-octadecenoyl-2-(9Z,12Z)-octadecadienoyl-sn-glycero-3-phosphate + CoA. It carries out the reaction 1-(5Z,8Z,11Z,14Z-eicosatetraenoyl)-sn-glycero-3-phosphate + (9Z)-octadecenoyl-CoA = 1-(5Z,8Z,11Z,14Z)-eicosatetraenoyl-2-(9Z)-octadecenoyl-sn-glycero-3-phosphate + CoA. The protein operates within glycerolipid metabolism; triacylglycerol biosynthesis. It participates in phospholipid metabolism; CDP-diacylglycerol biosynthesis; CDP-diacylglycerol from sn-glycerol 3-phosphate: step 1/3. Functionally, converts glycerol-3-phosphate to 1-acyl-sn-glycerol-3-phosphate (lysophosphatidic acid or LPA) by incorporating an acyl moiety at the sn-1 position of the glycerol backbone. Also converts LPA into 1,2-diacyl-sn-glycerol-3-phosphate (phosphatidic acid or PA) by incorporating an acyl moiety at the sn-2 position of the glycerol backbone. Protects cells against lipotoxicity. The protein is Glycerol-3-phosphate acyltransferase 3 of Gallus gallus (Chicken).